A 314-amino-acid chain; its full sequence is Putative lipoprotein LppW (314 aa).

Positions 1 to 22 (MRARPLTLLTALAAVTLVVVAG) are cleaved as a signal peptide. Cysteine 23 carries N-palmitoyl cysteine lipidation. Residue cysteine 23 is the site of S-diacylglycerol cysteine attachment.

The protein resides in the cell membrane. The protein is Putative lipoprotein LppW (lppW) of Mycobacterium bovis (strain ATCC BAA-935 / AF2122/97).